Consider the following 857-residue polypeptide: Leucine--tRNA ligase (857 aa).

The 'HIGH' region motif lies at 42–52 (PYPSGTLHMGH). The short motif at 616–620 (KMSKS) is the 'KMSKS' region element. Lys619 contributes to the ATP binding site.

It belongs to the class-I aminoacyl-tRNA synthetase family.

Its subcellular location is the cytoplasm. The enzyme catalyses tRNA(Leu) + L-leucine + ATP = L-leucyl-tRNA(Leu) + AMP + diphosphate. The chain is Leucine--tRNA ligase from Parasynechococcus marenigrum (strain WH8102).